Consider the following 276-residue polypeptide: Large ribosomal subunit protein uL2 (276 aa).

Positions 221–276 (RGSAMNPNDHPHGGGEGRAPIGRKSPMTPWGKKARGIKTRDRKKSSNELIIRRRTK) are disordered. Basic residues predominate over residues 252 to 263 (KKARGIKTRDRK).

Belongs to the universal ribosomal protein uL2 family. As to quaternary structure, part of the 50S ribosomal subunit. Forms a bridge to the 30S subunit in the 70S ribosome.

In terms of biological role, one of the primary rRNA binding proteins. Required for association of the 30S and 50S subunits to form the 70S ribosome, for tRNA binding and peptide bond formation. It has been suggested to have peptidyltransferase activity; this is somewhat controversial. Makes several contacts with the 16S rRNA in the 70S ribosome. The protein is Large ribosomal subunit protein uL2 of Phytoplasma australiense.